The following is a 202-amino-acid chain: MTKTKIDLKVVLLGYASVGKTCIVTRYTSGQFGDTHTTIGGAFSSKRVVVGETEVLLGIWDTAGTERYQAVNVSYYRRANAAIVCYDLTNRESWEKVTFWAEELTQNEPEIEIYIVGTKLDLIQQGDIKAVPEEEVKQTARRYKAHIFETSSRTGENVSLLFQTIAEDFCKRTNNGTNPVNSNPSNVVNVNTQTQKKKGGCC.

14-21 contributes to the GTP binding site; it reads GYASVGKT. Residues 35 to 43 carry the Effector region motif; the sequence is THTTIGGAF. GTP contacts are provided by residues 61 to 65 and 118 to 121; these read DTAGT and TKLD. Residues cysteine 201 and cysteine 202 are each lipidated (S-geranylgeranyl cysteine).

This sequence belongs to the small GTPase superfamily. Rab family.

It is found in the endoplasmic reticulum-Golgi intermediate compartment. The protein resides in the endosome. Its subcellular location is the endoplasmic reticulum. The protein localises to the golgi apparatus. It localises to the membrane. Functionally, may be involved in autophagy-related processes. The protein is Ras-related protein Rab-24 (rab24) of Dictyostelium discoideum (Social amoeba).